The primary structure comprises 356 residues: MTIQTDDFDMSDLPPARRMLSAAPASPKEEAIERALRPKLFDDYVGQTKAREQLEIFIGAANKRQEALDHVLLFGPPGLGKTTLSHIIAHELGVNMRSTSGPVLEKPKDLAALLTNLEKNDVLFIDEIHRLSPVVEEILYPALEDYQIDIMIGEGPAARSIKLDLQPFTLVGATTRAGMLTNPLRDRFGIVARLEFYTPEELARIVKRSAGLLNAPMDAEGGFEIARRSRGTPRIANRLLRRVRDYADVKGNGTITLDIANRALAMLDVDPQGFDLMDRKFLEAVILRFDGGPVGLDNIAASIGEESGTIEDVIEPYLIQQGFLQRTPRGRIATLAAYRHLGVAPPRGNAENLFEE.

Positions 13 to 197 (LPPARRMLSA…FGIVARLEFY (185 aa)) are large ATPase domain (RuvB-L). ATP contacts are provided by residues Leu36, Arg37, Gly78, Lys81, Thr82, Thr83, 144-146 (EDY), Arg187, Tyr197, and Arg234. Thr82 is a Mg(2+) binding site. The small ATPAse domain (RuvB-S) stretch occupies residues 198–268 (TPEELARIVK…IANRALAMLD (71 aa)). The head domain (RuvB-H) stretch occupies residues 271–356 (PQGFDLMDRK…RGNAENLFEE (86 aa)). Residues Arg326 and Arg331 each contribute to the DNA site.

It belongs to the RuvB family. In terms of assembly, homohexamer. Forms an RuvA(8)-RuvB(12)-Holliday junction (HJ) complex. HJ DNA is sandwiched between 2 RuvA tetramers; dsDNA enters through RuvA and exits via RuvB. An RuvB hexamer assembles on each DNA strand where it exits the tetramer. Each RuvB hexamer is contacted by two RuvA subunits (via domain III) on 2 adjacent RuvB subunits; this complex drives branch migration. In the full resolvosome a probable DNA-RuvA(4)-RuvB(12)-RuvC(2) complex forms which resolves the HJ.

It localises to the cytoplasm. The enzyme catalyses ATP + H2O = ADP + phosphate + H(+). Its function is as follows. The RuvA-RuvB-RuvC complex processes Holliday junction (HJ) DNA during genetic recombination and DNA repair, while the RuvA-RuvB complex plays an important role in the rescue of blocked DNA replication forks via replication fork reversal (RFR). RuvA specifically binds to HJ cruciform DNA, conferring on it an open structure. The RuvB hexamer acts as an ATP-dependent pump, pulling dsDNA into and through the RuvAB complex. RuvB forms 2 homohexamers on either side of HJ DNA bound by 1 or 2 RuvA tetramers; 4 subunits per hexamer contact DNA at a time. Coordinated motions by a converter formed by DNA-disengaged RuvB subunits stimulates ATP hydrolysis and nucleotide exchange. Immobilization of the converter enables RuvB to convert the ATP-contained energy into a lever motion, pulling 2 nucleotides of DNA out of the RuvA tetramer per ATP hydrolyzed, thus driving DNA branch migration. The RuvB motors rotate together with the DNA substrate, which together with the progressing nucleotide cycle form the mechanistic basis for DNA recombination by continuous HJ branch migration. Branch migration allows RuvC to scan DNA until it finds its consensus sequence, where it cleaves and resolves cruciform DNA. This is Holliday junction branch migration complex subunit RuvB from Polaromonas naphthalenivorans (strain CJ2).